Consider the following 301-residue polypeptide: Protoheme IX farnesyltransferase 1 (301 aa).

A run of 9 helical transmembrane segments spans residues 29–49 (VVALMLLTVLVGMCLAVPHAV), 51–71 (VQPLLAGMLGIAMMAGSAAAL), 101–121 (ALIFAASLGSLGFIVLYSLVN), 123–143 (LTAWLTFASLIGYALVYTAYL), 150–170 (NIVIGGLAGAMPPLLGWTAVT), 177–197 (ALLLVIIIFTWTPPHFWALAI), 223–243 (CILLYTVLLAIACLLPVLVGM), 244–264 (CGPVYFVCSSLLSTGFIYKAW), and 274–294 (LAMQVFRFSIYHLMLLFMALL).

Belongs to the UbiA prenyltransferase family. Protoheme IX farnesyltransferase subfamily.

The protein localises to the cell inner membrane. It carries out the reaction heme b + (2E,6E)-farnesyl diphosphate + H2O = Fe(II)-heme o + diphosphate. It functions in the pathway porphyrin-containing compound metabolism; heme O biosynthesis; heme O from protoheme: step 1/1. Converts heme B (protoheme IX) to heme O by substitution of the vinyl group on carbon 2 of heme B porphyrin ring with a hydroxyethyl farnesyl side group. The polypeptide is Protoheme IX farnesyltransferase 1 (Shewanella baltica (strain OS195)).